The sequence spans 327 residues: S-adenosylmethionine/S-adenosylhomocysteine transporter (327 aa).

Transmembrane regions (helical) follow at residues 22-42 (CDMA…SFAL), 53-73 (LFVT…LLLC), 85-105 (IMPI…LEFI), 114-134 (TACF…YVQL), 143-163 (LGGL…GGSE), 165-185 (VAEW…ATCL), 202-222 (SLSM…LSLI), 240-260 (LFLQ…YNLF), 271-291 (FLSF…WLLL), and 294-314 (SFPP…RLIY). The EamA 1 domain occupies 34–157 (FIWSSSFALS…LGLVSYLVYL (124 aa)). The EamA 2 domain maps to 189-313 (GWTLLRKLGR…GFMVLGCRLI (125 aa)).

Belongs to the drug/metabolite transporter (DMT) superfamily. 10 TMS drug/metabolite exporter (DME) (TC 2.A.7.3) family.

It localises to the cell membrane. Transports S-adenosylmethionine (SAM) and S-adenosylhomocysteine (SAH). Allows bacteria to acquire SAM from the eukaryotic host cell and to likely remove the toxic by-product SAH. The protein is S-adenosylmethionine/S-adenosylhomocysteine transporter of Chlamydia trachomatis serovar D (strain ATCC VR-885 / DSM 19411 / UW-3/Cx).